The chain runs to 409 residues: Argininosuccinate synthase (409 aa).

Residues Ala10–Ser18 and Ala37 contribute to the ATP site. Residues Tyr90 and Ser95 each contribute to the L-citrulline site. Residue Gly120 coordinates ATP. L-aspartate-binding residues include Thr122, Asn126, and Asp127. Asn126 is a binding site for L-citrulline. Residues Arg130, Ser182, Ser191, Glu267, and Tyr279 each coordinate L-citrulline.

This sequence belongs to the argininosuccinate synthase family. Type 1 subfamily. In terms of assembly, homotetramer.

The protein resides in the cytoplasm. It carries out the reaction L-citrulline + L-aspartate + ATP = 2-(N(omega)-L-arginino)succinate + AMP + diphosphate + H(+). It participates in amino-acid biosynthesis; L-arginine biosynthesis; L-arginine from L-ornithine and carbamoyl phosphate: step 2/3. The polypeptide is Argininosuccinate synthase (Azoarcus sp. (strain BH72)).